The chain runs to 470 residues: uncharacterized protein (470 aa).

A coiled-coil region spans residues 418 to 453; the sequence is SECCEEQEEKEKKKEKEKEKKKEKDDDDDQQNNNNN. A disordered region spans residues 423 to 470; the sequence is EQEEKEKKKEKEKEKKKEKDDDDDQQNNNNNDQNGLGLGLGLNFGLNL. Basic and acidic residues predominate over residues 426 to 441; it reads EKEKKKEKEKEKKKEK. The segment covering 448–457 has biased composition (low complexity); the sequence is QNNNNNDQNG.

This is an uncharacterized protein from Acidianus bottle-shaped virus (isolate Italy/Pozzuoli) (ABV).